The sequence spans 197 residues: Recombination protein RecR (197 aa).

The segment at 56 to 71 adopts a C4-type zinc-finger fold; it reads CERCNTFTETEICQRC. The Toprim domain occupies 79-174; that stretch reads SLLCVVEMPA…RVSRLSRGVP (96 aa).

The protein belongs to the RecR family.

May play a role in DNA repair. It seems to be involved in an RecBC-independent recombinational process of DNA repair. It may act with RecF and RecO. This Aromatoleum aromaticum (strain DSM 19018 / LMG 30748 / EbN1) (Azoarcus sp. (strain EbN1)) protein is Recombination protein RecR.